Here is a 141-residue protein sequence, read N- to C-terminus: Small ribosomal subunit protein uS9c (141 aa).

The protein belongs to the universal ribosomal protein uS9 family.

Its subcellular location is the plastid. It is found in the chloroplast. In Tupiella akineta (Green alga), this protein is Small ribosomal subunit protein uS9c (rps9).